The primary structure comprises 115 residues: Guanylin (115 aa).

An N-terminal signal peptide occupies residues 1-21; it reads MNACVLSVLCLLGAVAVLVEG. The propeptide occupies 22–100; sequence VTVQDGDLSF…LQRLEAIAQD (79 aa). Cystine bridges form between Cys-69–Cys-82, Cys-104–Cys-112, and Cys-107–Cys-115.

Belongs to the guanylin family.

The protein resides in the secreted. In terms of biological role, endogenous activator of intestinal guanylate cyclase. It stimulates this enzyme through the same receptor binding region as the heat-stable enterotoxins. This chain is Guanylin (GUCA2A), found in Notomys alexis (Spinifex hopping mouse).